Reading from the N-terminus, the 102-residue chain is Large ribosomal subunit protein bL21 (102 aa).

This sequence belongs to the bacterial ribosomal protein bL21 family. As to quaternary structure, part of the 50S ribosomal subunit. Contacts protein L20.

In terms of biological role, this protein binds to 23S rRNA in the presence of protein L20. This chain is Large ribosomal subunit protein bL21, found in Lachnospira eligens (strain ATCC 27750 / DSM 3376 / VPI C15-48 / C15-B4) (Eubacterium eligens).